The sequence spans 441 residues: tRNA modification GTPase MnmE (441 aa).

The (6S)-5-formyl-5,6,7,8-tetrahydrofolate site is built by Arg-21, Glu-79, and Lys-118. Residues 214 to 370 (GFKIAIVGKP…LEGYLKTQDT (157 aa)) enclose the TrmE-type G domain. GTP-binding positions include 224 to 229 (NVGKSS), 243 to 249 (SDEAGTT), and 268 to 271 (DTAG). Ser-228 and Thr-249 together coordinate Mg(2+). Residue Lys-441 coordinates (6S)-5-formyl-5,6,7,8-tetrahydrofolate.

It belongs to the TRAFAC class TrmE-Era-EngA-EngB-Septin-like GTPase superfamily. TrmE GTPase family. Homodimer. Heterotetramer of two MnmE and two MnmG subunits. It depends on K(+) as a cofactor.

It localises to the cytoplasm. Exhibits a very high intrinsic GTPase hydrolysis rate. Involved in the addition of a carboxymethylaminomethyl (cmnm) group at the wobble position (U34) of certain tRNAs, forming tRNA-cmnm(5)s(2)U34. This chain is tRNA modification GTPase MnmE, found in Campylobacter concisus (strain 13826).